The primary structure comprises 83 residues: MKLSPKAAIEVCNEAAKKGLWILGIDGGHWLNPGFRIDSSASWTYDMPEEYKSKTPENNRLAIENIKDDIENGYTAFIITLKM.

The protein is Colicin-E5 immunity protein in ColE9 of Escherichia coli.